The sequence spans 313 residues: MNATEQAANGDRGTTRSAGGRLRYLLHAPGACQLMGVHDGLSARIAVAEGFEALWASGLCMSTARGVRDSDEASWTELLTLVGTMTDAVPGVPVLVDGDTGYGNFNTARRFAGRAERVGAAGVCFEDKVFPKMNSFFGDGHQLAPVAEFCGKIRACKDAQRDPDFVVVARTEALISKLPMEEALDRAAAYAEAGADALFIHSRMNTPQQIATFMERWEGSTPVLIAPTTYHTPSVDDFAALGIAGCIWANHSMRAAFAAMRDVCQRIRTDRGIYGIEDQVAPLKEIFGLFDYEGLEKDENCYTQAPDLAAVQG.

Asp-69 serves as the catalytic Nucleophile.

This sequence belongs to the isocitrate lyase/PEP mutase superfamily. PEP mutase family.

The enzyme catalyses phosphoenolpyruvate + H(+) = 3-phosphonopyruvate. Its pathway is secondary metabolite biosynthesis; bialaphos biosynthesis. Its function is as follows. Formation of a carbon-phosphorus bond by converting phosphoenolpyruvate (PEP) to phosphonopyruvate (P-Pyr). The polypeptide is Phosphoenolpyruvate phosphomutase (bcpB) (Streptomyces hygroscopicus).